A 796-amino-acid chain; its full sequence is Striatin-3 (796 aa).

At M1 the chain carries N-acetylmethionine. A compositionally biased stretch (gly residues) spans M1–G13. Positions M1 to P60 are disordered. A caveolin-binding region spans residues Y71–F79. Positions A77–K136 form a coiled coil. Residue T150 is modified to Phosphothreonine. Residues Q166–L183 form a calmodulin-binding region. Phosphoserine occurs at positions 202, 214, 229, 257, and 334. Disordered regions lie at residues E252–G271 and E311–P335. Acidic residues predominate over residues N253–M264. WD repeat units lie at residues S477 to K516, A530 to Y569, A583 to C622, Q678 to S717, A720 to E759, and K766 to F795.

It belongs to the WD repeat striatin family. Tetramerizes. Part of the core of STRIPAK complexes composed of PP2A catalytic and scaffolding subunits, the striatins (PP2A regulatory subunits), the striatin-associated proteins MOB4, STRIP1 and STRIP2, PDCD10 and members of the STE20 kinases, such as STK24 and STK26. The STRIPAK complex can be extended by adapter proteins such as SLMAP:SIKE1 or CTTNBP2NL. Interacts with CDC42BPB. Mainly expressed in the brain and muscles but is also detected at low levels in various tissues such as kidney, spleen and lung.

It localises to the cytoplasm. The protein resides in the membrane. In terms of biological role, calmodulin-binding scaffolding protein which is the center of the striatin-interacting phosphatase and kinase (STRIPAK) complexes. STRIPAK complexes have critical roles in protein (de)phosphorylation and are regulators of multiple signaling pathways including Hippo, MAPK, nuclear receptor and cytoskeleton remodeling. Different types of STRIPAK complexes are involved in a variety of biological processes such as cell growth, differentiation, apoptosis, metabolism and immune regulation. The polypeptide is Striatin-3 (Strn3) (Mus musculus (Mouse)).